The sequence spans 213 residues: Putative 3-methyladenine DNA glycosylase (213 aa).

It belongs to the DNA glycosylase MPG family.

This chain is Putative 3-methyladenine DNA glycosylase, found in Latilactobacillus sakei subsp. sakei (strain 23K) (Lactobacillus sakei subsp. sakei).